The chain runs to 641 residues: Tegument protein UL35 (641 aa).

Disordered regions lie at residues 353 to 373 (ERGE…PREA), 500 to 572 (ASSS…PRQR), and 587 to 641 (AYSH…LRHL). Residues 358 to 367 (GDEDEEQEND) show a composition bias toward acidic residues. Low complexity predominate over residues 500–563 (ASSSSASSSS…LSGSHGISSA (64 aa)). A compositionally biased stretch (basic residues) spans 589–599 (SHHRRHRRRRS). Over residues 632-641 (DDLAENLRHL) the composition is skewed to basic and acidic residues.

Belongs to the herpesviridae pp85 family. In terms of assembly, interacts with UL82. Interacts with isoform UL35A. Interacts with host UBP7; this interaction significantly inhibits the ability of USP7 to form nuclear bodies. Interacts with host DCAF1 (via C-terminus). Interacts with host SNX5; this interaction allows proper gB localization during viral assembly. Interacts with host TBK1; this interaction prevents type I interferon production. As to quaternary structure, interacts with UL82. Interacts with isoform UL35. Interacts with host UBP7; this interaction significantly inhibits the ability of USP7 to form nuclear bodies. Interacts with host SNX5; this interaction allows proper gB localization during viral assembly.

The protein resides in the virion tegument. It is found in the host nucleus. It localises to the host cytoplasm. Its function is as follows. Plays important role in immediate-early gene expression through interaction with UL82. Forms nuclear bodies in host nucleus, independently of PML. In turn, UL35 nuclear bodies associate with and remodel PML bodies. Through interaction with host DCAF1, causes cells to accumulate in the G2 phase of the cell cycle by inducing a DNA damage response. Regulates viral assembly by controlling the localization of the essential gB through regulation of a retrograde transport pathway. This modulation occurs via binding and inhibition of host sorting nexin 5/SNX5. Also plays a role in the inhibition of pattern recognition receptor-mediated type I interferon signaling at the level of TBK1. Promotes cytoplasmic UL82 accumulation and inhibits UL35-containing nuclear bodies formation. Regulates viral assembly by controlling the localization of the essential gB through regulation of a retrograde transport pathway. This modulation occurs via binding and inhibition of host sorting nexin 5/SNX5. The sequence is that of Tegument protein UL35 (UL35) from Homo sapiens (Human).